A 413-amino-acid chain; its full sequence is Multidrug resistance protein MdtM (413 aa).

The Cytoplasmic portion of the chain corresponds to methionine 1 to threonine 14. The chain crosses the membrane as a helical span at residues leucine 15–isoleucine 35. Over glutamine 36–serine 51 the chain is Periplasmic. The helical transmembrane segment at leucine 52–glycine 72 threads the bilayer. Residues proline 73 to arginine 81 lie on the Cytoplasmic side of the membrane. A helical transmembrane segment spans residues proline 82–threonine 102. Topologically, residues serine 103–glutamine 106 are periplasmic. The helical transmembrane segment at phenylalanine 107–valine 127 threads the bilayer. At threonine 128 to lysine 140 the chain is on the cytoplasmic side. Residues leucine 141–alanine 161 form a helical membrane-spanning segment. Residues alanine 162–lysine 170 are Periplasmic-facing. A helical membrane pass occupies residues valine 171–methionine 191. At proline 192–alanine 225 the chain is on the cytoplasmic side. A helical membrane pass occupies residues threonine 226–isoleucine 246. The Periplasmic segment spans residues aspartate 247–serine 254. Residues glutamine 255–valine 275 traverse the membrane as a helical segment. Over arginine 276–arginine 289 the chain is Cytoplasmic. The next 2 helical transmembrane spans lie at alanine 290–histidine 310 and valine 311–proline 331. Over threonine 332–serine 351 the chain is Cytoplasmic. Residues leucine 352–phenylalanine 372 form a helical membrane-spanning segment. At histidine 373–arginine 376 the chain is on the periplasmic side. A helical membrane pass occupies residues leucine 377–leucine 397. Topologically, residues leucine 398–lysine 413 are cytoplasmic.

This sequence belongs to the major facilitator superfamily.

The protein resides in the cell inner membrane. In terms of biological role, proton-dependent efflux pump. Confers resistance to a broad spectrum of chemically unrelated substrates. The protein is Multidrug resistance protein MdtM (mdtM) of Salmonella typhimurium (strain LT2 / SGSC1412 / ATCC 700720).